The sequence spans 205 residues: Octanoyltransferase (205 aa).

The 176-residue stretch at 30-205 (NLSDELVWLL…ILKQEFHKIF (176 aa)) folds into the BPL/LPL catalytic domain. Substrate contacts are provided by residues 68 to 75 (RGGKYTYH), 140 to 142 (AFG), and 153 to 155 (GIA). Cys171 functions as the Acyl-thioester intermediate in the catalytic mechanism.

Belongs to the LipB family.

Its subcellular location is the cytoplasm. It carries out the reaction octanoyl-[ACP] + L-lysyl-[protein] = N(6)-octanoyl-L-lysyl-[protein] + holo-[ACP] + H(+). It functions in the pathway protein modification; protein lipoylation via endogenous pathway; protein N(6)-(lipoyl)lysine from octanoyl-[acyl-carrier-protein]: step 1/2. Functionally, catalyzes the transfer of endogenously produced octanoic acid from octanoyl-acyl-carrier-protein onto the lipoyl domains of lipoate-dependent enzymes. Lipoyl-ACP can also act as a substrate although octanoyl-ACP is likely to be the physiological substrate. This chain is Octanoyltransferase, found in Wolbachia pipientis subsp. Culex pipiens (strain wPip).